We begin with the raw amino-acid sequence, 127 residues long: MLSVGNDIVENERIRELLQKHGDRFLKRVFTDDEVEYCHKHKDPVPFLAGRFACKEAVIKALNLEPGQVADMREIELAGTNFGKKTLVIHGKTEKFFREKGFTGSSVSISHADHYSTAVVVFFKEPK.

The Mg(2+) site is built by Asp-7 and Glu-56.

It belongs to the P-Pant transferase superfamily. AcpS family. Mg(2+) serves as cofactor.

Its subcellular location is the cytoplasm. The enzyme catalyses apo-[ACP] + CoA = holo-[ACP] + adenosine 3',5'-bisphosphate + H(+). Its function is as follows. Transfers the 4'-phosphopantetheine moiety from coenzyme A to a Ser of acyl-carrier-protein. The protein is Holo-[acyl-carrier-protein] synthase of Leptospira biflexa serovar Patoc (strain Patoc 1 / Ames).